Here is a 188-residue protein sequence, read N- to C-terminus: MDVNIAPLRAWDDFFPGSDRFARPDFRDISKWNNRVVSNLLYYQTNYLVVAAMMISIVGFLSPFNMILGGIVVVLVFTGFVWAAHNKDVLRRMKKRYPTTFVMVVMLASYFLISMFGGVMVFVFGITFPLLLMFIHASLRLRNLKNKLENKMEGIGLKRTPMGIVLDALEQQEEGINRLTDYISKVKE.

N-acetylmethionine is present on methionine 1. The Cytoplasmic portion of the chain corresponds to 1 to 35; that stretch reads MDVNIAPLRAWDDFFPGSDRFARPDFRDISKWNNR. 2 consecutive transmembrane segments (helical) span residues 36-56 and 57-77; these read VVSNLLYYQTNYLVVAAMMIS and IVGFLSPFNMILGGIVVVLVF. Topologically, residues 78-93 are cytoplasmic; that stretch reads TGFVWAAHNKDVLRRM. The next 2 membrane-spanning stretches (helical) occupy residues 94–114 and 115–135; these read KKRYPTTFVMVVMLASYFLIS and MFGGVMVFVFGITFPLLLMFI. Positions 103–117 are required for homodimer formation and heterodimer formation with ARL6IP1; the sequence is MVVMLASYFLISMFG. The Cytoplasmic segment spans residues 136–188; sequence HASLRLRNLKNKLENKMEGIGLKRTPMGIVLDALEQQEEGINRLTDYISKVKE. Positions 136 to 188 are targeting to endoplasmic reticulum membrane; it reads HASLRLRNLKNKLENKMEGIGLKRTPMGIVLDALEQQEEGINRLTDYISKVKE.

It belongs to the PRA1 family. As to quaternary structure, homodimer. Heterodimer with ARL6IP1. Forms multimers. Interacts with ARL6. Interacts with prenylated RAB1A and RAB3A. Interacts with SLC1A1/EAAC1. Interacts with RTN2 (via first transmembrane domain). Does not interact with VAMP1, VAMP2 or VAMP3.

The protein localises to the endoplasmic reticulum membrane. It localises to the cell membrane. The protein resides in the cytoplasm. Its subcellular location is the cytoskeleton. Its function is as follows. Regulates intracellular concentrations of taurine and glutamate. Negatively modulates SLC1A1/EAAC1 glutamate transport activity by decreasing its affinity for glutamate in a PKC activity-dependent manner. Plays a role in the retention of SLC1A1/EAAC1 in the endoplasmic reticulum. The polypeptide is PRA1 family protein 3 (ARL6IP5) (Homo sapiens (Human)).